A 249-amino-acid chain; its full sequence is 5'-nucleotidase SurE (249 aa).

Residues aspartate 8, aspartate 9, serine 39, and asparagine 91 each contribute to the a divalent metal cation site.

The protein belongs to the SurE nucleotidase family. It depends on a divalent metal cation as a cofactor.

Its subcellular location is the cytoplasm. It carries out the reaction a ribonucleoside 5'-phosphate + H2O = a ribonucleoside + phosphate. Its function is as follows. Nucleotidase that shows phosphatase activity on nucleoside 5'-monophosphates. The protein is 5'-nucleotidase SurE of Haemophilus influenzae (strain ATCC 51907 / DSM 11121 / KW20 / Rd).